A 448-amino-acid polypeptide reads, in one-letter code: Glutamyl-tRNA reductase 2 (448 aa).

Substrate is bound by residues 50–53 (TCER), S109, 114–116 (ESD), and Q120. C51 serves as the catalytic Nucleophile. 190–195 (GTGQVA) is an NADP(+) binding site. The segment at 423–448 (DQAVPAYSPQPIGNTSNAAASATPRR) is disordered. A compositionally biased stretch (polar residues) spans 433–442 (PIGNTSNAAA).

The protein belongs to the glutamyl-tRNA reductase family. As to quaternary structure, homodimer.

The enzyme catalyses (S)-4-amino-5-oxopentanoate + tRNA(Glu) + NADP(+) = L-glutamyl-tRNA(Glu) + NADPH + H(+). It functions in the pathway porphyrin-containing compound metabolism; protoporphyrin-IX biosynthesis; 5-aminolevulinate from L-glutamyl-tRNA(Glu): step 1/2. Its function is as follows. Catalyzes the NADPH-dependent reduction of glutamyl-tRNA(Glu) to glutamate 1-semialdehyde (GSA). This Nocardioides sp. (strain ATCC BAA-499 / JS614) protein is Glutamyl-tRNA reductase 2.